Reading from the N-terminus, the 262-residue chain is Hydroxyethylthiazole kinase (262 aa).

Methionine 50 contacts substrate. ATP is bound by residues arginine 125 and threonine 171. Glycine 198 provides a ligand contact to substrate.

The protein belongs to the Thz kinase family. Mg(2+) is required as a cofactor.

The enzyme catalyses 5-(2-hydroxyethyl)-4-methylthiazole + ATP = 4-methyl-5-(2-phosphooxyethyl)-thiazole + ADP + H(+). Its pathway is cofactor biosynthesis; thiamine diphosphate biosynthesis; 4-methyl-5-(2-phosphoethyl)-thiazole from 5-(2-hydroxyethyl)-4-methylthiazole: step 1/1. Its function is as follows. Catalyzes the phosphorylation of the hydroxyl group of 4-methyl-5-beta-hydroxyethylthiazole (THZ). In Escherichia coli O81 (strain ED1a), this protein is Hydroxyethylthiazole kinase.